Reading from the N-terminus, the 338-residue chain is Tripartite motif-containing protein 44 (338 aa).

2 disordered regions span residues 1–25 (MASG…EPDE) and 72–162 (ARGD…EFDP). Residues 95 to 162 (EAGEGIESEE…ETEAESEFDP (68 aa)) are compositionally biased toward acidic residues. Positions 109–153 (EEESETEEESEDESEEDSEEEMEDEQESEAEEDNQEEGESEAEGE) form a coiled coil. A B box-type zinc finger spans residues 171–212 (VAKRKCPDHGLDLSTYCQEDKQLICVLCPVIGAHHGHHLSTL). Cys-176, His-179, Cys-198, and His-204 together coordinate Zn(2+). Residues 257–322 (QQEFKKVQKV…QLDTSNESAE (66 aa)) are a coiled coil. The disordered stretch occupies residues 307–338 (MAQAKEQLDTSNESAEPKAEGDEEEPGGTDED). A compositionally biased stretch (acidic residues) spans 327–338 (GDEEEPGGTDED).

Interacts (via coiled coil) with TRIM17 (via coiled coil).

In terms of biological role, may play a role in the process of differentiation and maturation of neuronal cells. May regulate the activity of TRIM17. Is a negative regulator of PAX6 expression. This is Tripartite motif-containing protein 44 (TRIM44) from Bos taurus (Bovine).